A 160-amino-acid chain; its full sequence is NADH-quinone oxidoreductase subunit B (160 aa).

C37, C38, C102, and C132 together coordinate [4Fe-4S] cluster.

Belongs to the complex I 20 kDa subunit family. NDH-1 is composed of 14 different subunits. Subunits NuoB, C, D, E, F, and G constitute the peripheral sector of the complex. [4Fe-4S] cluster serves as cofactor.

It localises to the cell inner membrane. It carries out the reaction a quinone + NADH + 5 H(+)(in) = a quinol + NAD(+) + 4 H(+)(out). In terms of biological role, NDH-1 shuttles electrons from NADH, via FMN and iron-sulfur (Fe-S) centers, to quinones in the respiratory chain. Couples the redox reaction to proton translocation (for every two electrons transferred, four hydrogen ions are translocated across the cytoplasmic membrane), and thus conserves the redox energy in a proton gradient. The protein is NADH-quinone oxidoreductase subunit B of Cupriavidus pinatubonensis (strain JMP 134 / LMG 1197) (Cupriavidus necator (strain JMP 134)).